The primary structure comprises 280 residues: Para-Rep C2 (280 aa).

Residues 1 to 97 form the CRESS-DNA virus Rep endonuclease domain; it reads MARRYCFTLN…ETLISEIGIP (97 aa). The short motif at 6–9 is the RCR-1 element; that stretch reads CFTL. Positions 37 and 45 each coordinate a divalent metal cation. An RCR-2 motif is present at residues 45–47; it reads HLQ. Residues 54–75 carry the Nuclear localization signal motif; that stretch reads NKIRLGGLKKKFGNRAHWEIAR. The active-site For DNA cleavage activity is Tyr84. The RCR-3 motif lies at 84 to 87; sequence YCCK. Positions 97–103 match the Nuclear localization signal motif; sequence PVMKGSN. 172–180 lines the ATP pocket; that stretch reads GSDGGEGKT.

It belongs to the nanoviridea/circoviridae replication-associated protein family. In terms of assembly, homooligomer (Potential). Rep binds to repeated DNA motifs (iterons). The cofactor is Mg(2+). Mn(2+) serves as cofactor.

Its subcellular location is the host nucleus. It carries out the reaction ATP + H2O = ADP + phosphate + H(+). In terms of biological role, initiates and terminates the replication only of its own subviral DNA molecule. The closed circular ssDNA genome is first converted to a superhelical dsDNA. Rep binds a specific hairpin at the genome origin of replication. Introduces an endonucleolytic nick within the intergenic region of the genome, thereby initiating the rolling circle replication (RCR). Following cleavage, binds covalently to the 5'-phosphate of DNA as a tyrosyl ester. The cleavage gives rise to a free 3'-OH that serves as a primer for the cellular DNA polymerase. The polymerase synthesizes the (+) strand DNA by rolling circle mechanism. After one round of replication, a Rep-catalyzed nucleotidyl transfer reaction releases a circular single-stranded virus genome, thereby terminating the replication. Displays origin-specific DNA cleavage, nucleotidyl transferase, ATPase and helicase activities. This Subterranean clover stunt C2 alphasatellite (SCSC2A) protein is Para-Rep C2 (C2).